The following is a 410-amino-acid chain: Peptide chain release factor subunit 1 (410 aa).

This sequence belongs to the eukaryotic release factor 1 family. In terms of assembly, heterodimer of two subunits, one of which binds GTP.

It is found in the cytoplasm. Directs the termination of nascent peptide synthesis (translation) in response to the termination codons UAA, UAG and UGA. The protein is Peptide chain release factor subunit 1 of Picrophilus torridus (strain ATCC 700027 / DSM 9790 / JCM 10055 / NBRC 100828 / KAW 2/3).